The primary structure comprises 690 residues: SWI/SNF-related matrix-associated actin-dependent regulator of chromatin subfamily A-like protein 1 homolog (690 aa).

Positions 30 to 49 (MQAAANATASTSSAAPPAPP) are disordered. Residues 31–44 (QAAANATASTSSAA) are compositionally biased toward low complexity. An HARP domain is found at 92–170 (PTSLIKPTIG…AVKVELEPLP (79 aa)). Residues 209-367 (IFALERDGRI…FTQIRLIDHK (159 aa)) enclose the Helicase ATP-binding domain. Residue 222 to 229 (DEMGLGKS) coordinates ATP. Residues 316–319 (DESH) carry the DESH box motif. The Nuclear localization signal motif lies at 411 to 428 (RRLKADVLKDLPEKRREV). Positions 482 to 639 (ILENYFYPDA…TFRTADKMHL (158 aa)) constitute a Helicase C-terminal domain.

This sequence belongs to the SNF2/RAD54 helicase family. SMARCAL1 subfamily.

Its subcellular location is the nucleus. It catalyses the reaction ATP + H2O = ADP + phosphate + H(+). ATP-dependent annealing helicase that catalyzes the rewinding of the stably unwound DNA. The chain is SWI/SNF-related matrix-associated actin-dependent regulator of chromatin subfamily A-like protein 1 homolog from Caenorhabditis elegans.